Reading from the N-terminus, the 80-residue chain is RNA-binding protein Hfq (80 aa).

One can recognise a Sm domain in the interval 9 to 69 (DVFLNQVRKE…VSTISPNSPV (61 aa)).

This sequence belongs to the Hfq family. As to quaternary structure, homohexamer.

Its function is as follows. RNA chaperone that binds small regulatory RNA (sRNAs) and mRNAs to facilitate mRNA translational regulation in response to envelope stress, environmental stress and changes in metabolite concentrations. Also binds with high specificity to tRNAs. The protein is RNA-binding protein Hfq of Alkaliphilus oremlandii (strain OhILAs) (Clostridium oremlandii (strain OhILAs)).